The following is a 149-amino-acid chain: General odorant-binding protein 99b (149 aa).

Residues 1 to 16 (MKVLIVLLLGLAFVLA) form the signal peptide. 3 cysteine pairs are disulfide-bonded: C40/C71, C67/C125, and C114/C134.

Belongs to the PBP/GOBP family. In terms of tissue distribution, expressed in adult olfactory system. Expressed in subsets of sensilla in both olfactory organs, the maxillary palps, and third antennal segments.

It localises to the secreted. Functionally, present in the aqueous fluid surrounding olfactory sensory dendrites and are thought to aid in the capture and transport of hydrophobic odorants into and through this fluid. The sequence is that of General odorant-binding protein 99b (Obp99b) from Drosophila melanogaster (Fruit fly).